The following is a 265-amino-acid chain: Type 1 encapsulin shell protein (265 aa).

FMN-binding positions include 79 to 81 (RAT), W87, and 90 to 94 (DNLER). Positions 184-189 (EAGHYP) are pore-forming loop. Residue E235 participates in FMN binding.

The protein belongs to the encapsulin family. Family 1 subfamily. Homomultimeric. This encapsulin nanocompartment is formed by 60 subunits; monomers form 12 pentamers which assemble to form shells. There are 12 pores where the pentamers meet as well as 3-fold axis channels and dimer channels; none are larger than 3-4 Angstroms in diameter. The N-terminus of the protein is inside the shell, the C-terminus is outside. Probably 3, 4 or 5 Flp cargo decamers bind inside the encapulin nanocompartment. Requires FMN as cofactor.

The protein resides in the encapsulin nanocompartment. Its activity is regulated as follows. Proteolysis activated by calcium and cobalt. Its function is as follows. Shell component of a type 1 encapsulin nanocompartment. Assembles into proteinaceous shells 23-24 nm in diameter with 2-2.5 nm thick walls. Cargo protein Flp (ferritin-like protein, probably stores iron) is targeted to the interior via its C-terminal extension; empty intact shells can be isolated in the absence of cargo protein. Fe(2+) may be able to pass though the 5-fold and dimer channels in the protein shell. In terms of biological role, protease that exhibits activity toward chymotrypsin and trypsin substrates. Probably does not have antibacterial activity. In Thermotoga maritima (strain ATCC 43589 / DSM 3109 / JCM 10099 / NBRC 100826 / MSB8), this protein is Type 1 encapsulin shell protein.